The chain runs to 192 residues: DNA dC-&gt;dU-editing enzyme APOBEC-3Ca (192 aa).

One can recognise a CMP/dCMP-type deaminase domain in the interval 15 to 141 (IDPNTFRFHF…PNYQEGLCKL (127 aa)). His69 is a binding site for Zn(2+). The active-site Proton donor is the Glu71. Zn(2+) is bound by residues Cys100 and Cys103.

Belongs to the cytidine and deoxycytidylate deaminase family. In terms of assembly, (Microbial infection) Interacts with feline foamy virus protein Bet. This interaction does not induce APOBEC3Ca degradation but prevents its dimerization and incorporation into the virion. Zn(2+) serves as cofactor.

Its subcellular location is the nucleus. The protein localises to the cytoplasm. It catalyses the reaction a 2'-deoxycytidine in single-stranded DNA + H2O + H(+) = a 2'-deoxyuridine in single-stranded DNA + NH4(+). In terms of biological role, DNA deaminase (cytidine deaminase) which acts as an inhibitor of retrovirus replication and retrotransposon mobility via deaminase-dependent and -independent mechanisms. Selectively targets single-stranded DNA and does not deaminate double-stranded DNA or single- or double-stranded RNA. Does not reduce infectivity of foamy feline virus, feline immunodeficiency virus or feline leukemia virus. The protein is DNA dC-&gt;dU-editing enzyme APOBEC-3Ca of Felis catus (Cat).